The primary structure comprises 190 residues: Ras-related protein RabF1 (190 aa).

15-22 serves as a coordination point for GTP; sequence GDSGVGKT. An Effector region motif is present at residues 37–44; that stretch reads HITIGIEF. Residues 62-66 and 119-122 contribute to the GTP site; these read DTAGE and NKND. Position 187 is a cysteine methyl ester (Cys187). Residue Cys187 is the site of S-geranylgeranyl cysteine attachment. The propeptide at 188 to 190 is removed in mature form; sequence IIN.

It belongs to the small GTPase superfamily. Rab family.

The protein resides in the cell membrane. This chain is Ras-related protein RabF1 (rabF1-1), found in Dictyostelium discoideum (Social amoeba).